The following is a 529-amino-acid chain: MASDNLVVLNALDTARTQWYHVTAVIIAGMGFFTDAYDLFCISTVSKLLGRLYYYDPSTKAPGKLPHMANNWVIGVALVGTLSGQLVFGWLGDKLGRKKVYGLTLILMVICALCSGLSLGYSPKSVIGTLCFFRFWLGFGIGGDYPLSATIMSEYANKSTRGAFIAAVFAMQGVGIIFAGLVSMTISKVFLMNFEGKPFNVDEVLSTEPEADYVWRIVLMLGALPALLTYYWRMKMPETGRYTAIIEGNAKQAAIDMGKVLDIEIQAEGDKLAQFKAANEYSLLSNEFFQRHGLHLIGTMSTWFLLDIAFYSQNLTQKDIFPVMGLTSKANTISALREMFETSRAMFVIALFGTFPGYWFTVFFIEKIGRFKIQLVGFFMMSVFMAIIGVKYDYLRNKEHKWTFAALYGLTFFFANFGPNSTTFVLPAELFPTRVRSTCHALSAALGKAGAMISAFGIQQYTQDQDVRKIKTAMLLLAFTNMVGFCCTFLVTETKGRSLEEISGEDGRQNETQMKTTRPVSGHPDDGWE.

Residues 1-21 (MASDNLVVLNALDTARTQWYH) lie on the Cytoplasmic side of the membrane. Residues 22 to 42 (VTAVIIAGMGFFTDAYDLFCI) traverse the membrane as a helical segment. Residues 43–71 (STVSKLLGRLYYYDPSTKAPGKLPHMANN) are Extracellular-facing. Residues 72-92 (WVIGVALVGTLSGQLVFGWLG) form a helical membrane-spanning segment. Residues 93–99 (DKLGRKK) lie on the Cytoplasmic side of the membrane. Residues 100–120 (VYGLTLILMVICALCSGLSLG) traverse the membrane as a helical segment. The Extracellular segment spans residues 121-125 (YSPKS). A helical transmembrane segment spans residues 126–146 (VIGTLCFFRFWLGFGIGGDYP). Topologically, residues 147–161 (LSATIMSEYANKSTR) are cytoplasmic. A helical membrane pass occupies residues 162–182 (GAFIAAVFAMQGVGIIFAGLV). Residues 183–211 (SMTISKVFLMNFEGKPFNVDEVLSTEPEA) lie on the Extracellular side of the membrane. The helical transmembrane segment at 212 to 232 (DYVWRIVLMLGALPALLTYYW) threads the bilayer. At 233 to 291 (RMKMPETGRYTAIIEGNAKQAAIDMGKVLDIEIQAEGDKLAQFKAANEYSLLSNEFFQR) the chain is on the cytoplasmic side. A helical transmembrane segment spans residues 292-312 (HGLHLIGTMSTWFLLDIAFYS). Over 313–344 (QNLTQKDIFPVMGLTSKANTISALREMFETSR) the chain is Extracellular. Asparagine 314 carries an N-linked (GlcNAc...) asparagine glycan. The helical transmembrane segment at 345–365 (AMFVIALFGTFPGYWFTVFFI) threads the bilayer. The Cytoplasmic portion of the chain corresponds to 366–374 (EKIGRFKIQ). Residues 375 to 395 (LVGFFMMSVFMAIIGVKYDYL) traverse the membrane as a helical segment. Over 396-405 (RNKEHKWTFA) the chain is Extracellular. Residues 406–426 (ALYGLTFFFANFGPNSTTFVL) traverse the membrane as a helical segment. Over 427–437 (PAELFPTRVRS) the chain is Cytoplasmic. A helical membrane pass occupies residues 438 to 458 (TCHALSAALGKAGAMISAFGI). Residues 459 to 471 (QQYTQDQDVRKIK) are Extracellular-facing. Residues 472–492 (TAMLLLAFTNMVGFCCTFLVT) form a helical membrane-spanning segment. Topologically, residues 493–529 (ETKGRSLEEISGEDGRQNETQMKTTRPVSGHPDDGWE) are cytoplasmic. The tract at residues 501 to 529 (EISGEDGRQNETQMKTTRPVSGHPDDGWE) is disordered. The segment covering 510 to 519 (NETQMKTTRP) has biased composition (polar residues).

Belongs to the major facilitator superfamily. Phosphate:H(+) symporter (TC 2.A.1.9) family.

The protein resides in the cell membrane. It catalyses the reaction phosphate(in) + H(+)(in) = phosphate(out) + H(+)(out). Its function is as follows. Low-affinity transporter for external inorganic phosphate (Pi) probably involved in the acquisition of phosphate released by arbuscular mycorrhizal (AM) fungi (e.g. Rhizophagus irregularis and Glomus intraradices) during AM symbiosis. Acts as a Pi-sensing machinery at the root tip level, independently of AM fungi, involved in the regulation of early root branching and lateral roots formation. The chain is Low affinity inorganic phosphate transporter 4 from Petunia hybrida (Petunia).